Consider the following 937-residue polypeptide: Inactive tyrosine-protein kinase transmembrane receptor ROR1 (937 aa).

A signal peptide spans 1–29; it reads MHRPRRRGTRPPLLALLAALLLAARGAAA. Over 30-406 the chain is Extracellular; sequence QETELSVSAE…KEKNKMEILY (377 aa). The Ig-like C2-type domain maps to 42 to 147; sequence PTSSWNISSE…EVVSSTGVLF (106 aa). Residues Asn-47 and Asn-66 are each glycosylated (N-linked (GlcNAc...) asparagine). 9 cysteine pairs are disulfide-bonded: Cys-79–Cys-131, Cys-170–Cys-235, Cys-178–Cys-228, Cys-219–Cys-260, Cys-248–Cys-296, Cys-252–Cys-282, Cys-313–Cys-391, Cys-334–Cys-374, and Cys-362–Cys-386. The region spanning 165 to 299 is the FZ domain; the sequence is EEDGFCQPYR…SPEAANCIRI (135 aa). A glycan (N-linked (GlcNAc...) asparagine) is linked at Asn-184. The 80-residue stretch at 312 to 391 folds into the Kringle domain; it reads KCYNSTGVDY…KSDLCDIPAC (80 aa). Residue Asn-315 is glycosylated (N-linked (GlcNAc...) asparagine). The helical transmembrane segment at 407 to 427 threads the bilayer; that stretch reads ILVPSVAIPLAIALLFFFICV. Residues 428–937 lie on the Cytoplasmic side of the membrane; sequence CRNNQKSSSA…HTESMISAEL (510 aa). The 274-residue stretch at 473–746 folds into the Protein kinase domain; sequence VRFMEELGEC…PRFKDIHVRL (274 aa). ATP-binding positions include 479 to 487 and Lys-506; that span reads LGECAFGKI. Tyr-645 bears the Phosphotyrosine; by autocatalysis mark. Over residues 753 to 762 the composition is skewed to low complexity; the sequence is SSHTSSTTPS. Disordered regions lie at residues 753 to 779 and 833 to 890; these read SSHTSSTTPSGGNATTQTTSLSASPVS and AAHY…HMSI. The segment covering 763 to 779 has biased composition (polar residues); that stretch reads GGNATTQTTSLSASPVS. Residues 854-864 show a composition bias toward low complexity; sequence RSPSSASGSTS. A compositionally biased stretch (polar residues) spans 865–880; that stretch reads TGHVTSLPSSGSNQEA.

The protein belongs to the protein kinase superfamily. Tyr protein kinase family. ROR subfamily. Interacts with ERBB2 and IGFBP5. As to expression, expressed strongly in human heart, lung and kidney, but weakly in the CNS. Isoform Short is strongly expressed in fetal and adult CNS and in a variety of human cancers, including those originating from CNS or PNS neuroectoderm.

The protein resides in the membrane. Its subcellular location is the cell projection. The protein localises to the axon. Its function is as follows. Has very low kinase activity in vitro and is unlikely to function as a tyrosine kinase in vivo. Receptor for ligand WNT5A which activate downstream NFkB signaling pathway and may result in the inhibition of WNT3A-mediated signaling. In inner ear, crucial for spiral ganglion neurons to innervate auditory hair cells. Via IGFBP5 ligand, forms a complex with ERBB2 to enhance CREB oncogenic signaling. In Homo sapiens (Human), this protein is Inactive tyrosine-protein kinase transmembrane receptor ROR1 (ROR1).